The primary structure comprises 188 residues: Inosine triphosphate pyrophosphatase (188 aa).

Residue 9–14 coordinates ITP; it reads TGNAKK. Position 39 (glutamate 39) interacts with Mg(2+). ITP is bound by residues lysine 51, 67 to 68, lysine 84, 143 to 146, lysine 166, and 171 to 172; these read DT, FGWD, and HR.

This sequence belongs to the HAM1 NTPase family. Homodimer. Mg(2+) serves as cofactor. It depends on Mn(2+) as a cofactor.

Its subcellular location is the cytoplasm. It carries out the reaction ITP + H2O = IMP + diphosphate + H(+). It catalyses the reaction dITP + H2O = dIMP + diphosphate + H(+). The catalysed reaction is XTP + H2O = XMP + diphosphate + H(+). Its function is as follows. Pyrophosphatase that hydrolyzes non-canonical purine nucleotides such as inosine triphosphate (ITP), deoxyinosine triphosphate (dITP) or xanthosine 5'-triphosphate (XTP) to their respective monophosphate derivatives. The enzyme does not distinguish between the deoxy- and ribose forms. Probably excludes non-canonical purines from RNA and DNA precursor pools, thus preventing their incorporation into RNA and DNA and avoiding chromosomal lesions. This chain is Inosine triphosphate pyrophosphatase, found in Anopheles gambiae (African malaria mosquito).